The following is a 386-amino-acid chain: Putative 8-amino-7-oxononanoate synthase 2 (386 aa).

Residue Arg-21 coordinates substrate. Position 104 to 105 (104 to 105 (GY)) interacts with pyridoxal 5'-phosphate. Substrate is bound at residue His-129. Residues Ser-176, 201-204 (DDAH), and 230-233 (TLSK) contribute to the pyridoxal 5'-phosphate site. The residue at position 233 (Lys-233) is an N6-(pyridoxal phosphate)lysine.

The protein belongs to the class-II pyridoxal-phosphate-dependent aminotransferase family. BioF subfamily. Homodimer. Requires pyridoxal 5'-phosphate as cofactor.

The catalysed reaction is 6-carboxyhexanoyl-[ACP] + L-alanine + H(+) = (8S)-8-amino-7-oxononanoate + holo-[ACP] + CO2. Its pathway is cofactor biosynthesis; biotin biosynthesis. Functionally, catalyzes the decarboxylative condensation of pimeloyl-[acyl-carrier protein] and L-alanine to produce 8-amino-7-oxononanoate (AON), [acyl-carrier protein], and carbon dioxide. In Bacillus velezensis (strain DSM 23117 / BGSC 10A6 / LMG 26770 / FZB42) (Bacillus amyloliquefaciens subsp. plantarum), this protein is Putative 8-amino-7-oxononanoate synthase 2 (bioF).